The primary structure comprises 349 residues: MTVEQTPENPGTAARAAAEETVNDILQGAWKARAIHVAVELGVPELLQEGPRTATALAEATGAHEQTLRRLLRLLATVGVFDDLGHDDLFAQNALSAVLLPDPASPVATDARFQAAPWHWRAWEQLTHSVRTGEASFDVANGTSFWQLTHEDPKARELFNRAMGSVSLTEAGQVAAAYDFSGAATAVDIGGGRGSLMAAVLDAFPGLRGTLLERPPVAEEARELLTGRGLADRCEILPGDFFETIPDGADVYLIKHVLHDWDDDDVVRILRRIATAMKPDSRLLVIDNLIDERPAASTLFVDLLLLVLVGGAERSESEFAALLEKSGLRVERSLPCGAGPVRIVEIRRA.

Residues Ser-167, Gly-190, 213–214 (ER), 240–241 (DF), and Lys-255 each bind S-adenosyl-L-methionine. His-259 functions as the Proton acceptor in the catalytic mechanism. Asn-288 provides a ligand contact to substrate.

This sequence belongs to the class I-like SAM-binding methyltransferase superfamily. Cation-independent O-methyltransferase family. COMT subfamily. Homodimer.

The enzyme catalyses 6-demethylmitomycin A + S-adenosyl-L-methionine = mitomycin A + S-adenosyl-L-homocysteine. It catalyses the reaction 6-demethylmitomycin B + S-adenosyl-L-methionine = mitomycin B + S-adenosyl-L-homocysteine. Its activity is regulated as follows. Completely inhibited by Zn(2+) and Cu(2+). Its function is as follows. Involved in the biosynthesis of the quinone methoxy group present in the mitomycin A and B, which are used as anticancer agents. In vitro, catalyzes the 6-O-methylation of both C9-beta- and C9-alpha-configured 6-hydroxymitomycins via the transfer of the S-methyl group of S-adenosyl-L-methionine (AdoMet) to the 6-demethylmitomycin A and B. It can also use hydroxyquinone as substrate. The sequence is that of Mitomycin biosynthesis 6-O-methyltransferase from Streptomyces lavendulae.